The primary structure comprises 716 residues: Delta-1-pyrroline-5-carboxylate synthase 1 (716 aa).

Residues 1–296 form a glutamate 5-kinase region; that stretch reads MASVDPSRSF…WESSKDVSTR (296 aa). 3 residues coordinate substrate: Ser60, Asp157, and Asn176. ATP contacts are provided by residues 196 to 197, 202 to 207, and 236 to 242; these read SD, YSGPPS, and RGGMTAK. The tract at residues 297-716 is gamma-glutamyl phosphate reductase; that stretch reads EMAVAARDCS…VYTHKSLPLQ (420 aa).

In the N-terminal section; belongs to the glutamate 5-kinase family. The protein in the C-terminal section; belongs to the gamma-glutamyl phosphate reductase family. Expressed at high levels in leaves.

It carries out the reaction L-glutamate + ATP = L-glutamyl 5-phosphate + ADP. The enzyme catalyses L-glutamate 5-semialdehyde + phosphate + NADP(+) = L-glutamyl 5-phosphate + NADPH + H(+). It participates in amino-acid biosynthesis; L-proline biosynthesis; L-glutamate 5-semialdehyde from L-glutamate: step 1/2. It functions in the pathway amino-acid biosynthesis; L-proline biosynthesis; L-glutamate 5-semialdehyde from L-glutamate: step 2/2. With respect to regulation, feedback regulated by proline. P5CS plays a key role in proline biosynthesis, leading to osmoregulation in plants. Involved in abiotic stress tolerance. In Oryza sativa subsp. japonica (Rice), this protein is Delta-1-pyrroline-5-carboxylate synthase 1.